An 85-amino-acid polypeptide reads, in one-letter code: Large ribosomal subunit protein bL27 (85 aa).

Over residues methionine 1 to arginine 11 the composition is skewed to polar residues. A disordered region spans residues methionine 1 to arginine 20.

The protein belongs to the bacterial ribosomal protein bL27 family.

In Sulfurihydrogenibium sp. (strain YO3AOP1), this protein is Large ribosomal subunit protein bL27.